The following is a 481-amino-acid chain: METMPNWLMQRAFLTPDRIAIETKEEKITFFALHEKVVSVCENLAYLQIKKGQKVAVLMKNGMEMIAVIHALSYIGAIAVLLNTRLSREELLWQMEDAEVICLLTDQIFEPEQVPVYTFEEVENGPKQSVVIQEEFSLAEAMTIIYTSGTTGKPKGVILTYGNHWASAVGSSLNLGLRDDDCWLACMPMFHVGGLSLLMKNIMYGMRVLLVPKYDPDFIHQAIQTKGVTIISVVAKMLTDLLERLGNETYPSSLRCMLLGGGPAPKPLLEACVQKGIPVYQTYGMTETSSQICTLSADYMLTKVGSAGKPLFPCQLRIEKDGKVMPANVEGEIVVKGPNVTRGYFKREDATRETIVDGWLHTGDLGYVDDEGFLYVLDRRSDLIISGGENIYPAQIEEVLLSHPLVLEAGVVGKSDETWGQVPVAFVVKAGQVTEEEMIHFCEEKLAKYKVPKAVYFLHELPRNASKKLLRRELRQLLEEK.

This sequence belongs to the ATP-dependent AMP-binding enzyme family. MenE subfamily.

It carries out the reaction 2-succinylbenzoate + ATP + CoA = 2-succinylbenzoyl-CoA + AMP + diphosphate. The protein operates within quinol/quinone metabolism; 1,4-dihydroxy-2-naphthoate biosynthesis; 1,4-dihydroxy-2-naphthoate from chorismate: step 5/7. It participates in quinol/quinone metabolism; menaquinone biosynthesis. Converts 2-succinylbenzoate (OSB) to 2-succinylbenzoyl-CoA (OSB-CoA). In Bacillus cytotoxicus (strain DSM 22905 / CIP 110041 / 391-98 / NVH 391-98), this protein is 2-succinylbenzoate--CoA ligase.